The chain runs to 403 residues: ESX-5 secretion system protein EccE5 (403 aa).

Helical transmembrane passes span 9-29 (LALSWARLTTVFVIDLLILIV) and 43-63 (IAWWVGVGIAVLVTLLSVVTY).

It belongs to the EccE family. As to quaternary structure, part of the ESX-5 / type VII secretion system (T7SS), which is composed of cytosolic and membrane components. The ESX-5 membrane complex is composed of EccB5, EccC5, EccD5 and EccE5.

It localises to the cell inner membrane. Functionally, part of the ESX-5 specialized secretion system, which is responsible for the secretion of EsxN and a number of PE_PGRS and PPE proteins. The sequence is that of ESX-5 secretion system protein EccE5 from Mycobacterium marinum (strain ATCC BAA-535 / M).